The chain runs to 139 residues: Putative pre-16S rRNA nuclease (139 aa).

The protein belongs to the YqgF nuclease family.

The protein resides in the cytoplasm. In terms of biological role, could be a nuclease involved in processing of the 5'-end of pre-16S rRNA. The chain is Putative pre-16S rRNA nuclease from Rippkaea orientalis (strain PCC 8801 / RF-1) (Cyanothece sp. (strain PCC 8801)).